Consider the following 734-residue polypeptide: Photosystem I P700 chlorophyll a apoprotein A2 (734 aa).

Transmembrane regions (helical) follow at residues 46–69 (IFAS…FHVA), 135–158 (LYTG…LHLQ), 175–199 (LNHH…HVAI), 273–291 (IAHH…GHMY), 330–353 (IHFQ…QHMY), 369–395 (AALY…IFFI), 417–439 (AIIS…LYVH), and 517–535 (FLVH…LILV). Positions 559 and 568 each coordinate [4Fe-4S] cluster. 2 helical membrane passes run 575 to 596 (AFYL…YWHW) and 643 to 665 (LSVW…MFLI). His-654, Met-662, and Tyr-670 together coordinate chlorophyll a. Trp-671 contacts phylloquinone. The chain crosses the membrane as a helical span at residues 707–727 (LVGLAHFSVGYIFTYAAFLIA).

Belongs to the PsaA/PsaB family. As to quaternary structure, the PsaA/B heterodimer binds the P700 chlorophyll special pair and subsequent electron acceptors. PSI consists of a core antenna complex that captures photons, and an electron transfer chain that converts photonic excitation into a charge separation. The eukaryotic PSI reaction center is composed of at least 11 subunits. Requires P700 is a chlorophyll a/chlorophyll a' dimer, A0 is one or more chlorophyll a, A1 is one or both phylloquinones and FX is a shared 4Fe-4S iron-sulfur center. as cofactor.

Its subcellular location is the plastid. The protein localises to the chloroplast thylakoid membrane. It carries out the reaction reduced [plastocyanin] + hnu + oxidized [2Fe-2S]-[ferredoxin] = oxidized [plastocyanin] + reduced [2Fe-2S]-[ferredoxin]. Its function is as follows. PsaA and PsaB bind P700, the primary electron donor of photosystem I (PSI), as well as the electron acceptors A0, A1 and FX. PSI is a plastocyanin-ferredoxin oxidoreductase, converting photonic excitation into a charge separation, which transfers an electron from the donor P700 chlorophyll pair to the spectroscopically characterized acceptors A0, A1, FX, FA and FB in turn. Oxidized P700 is reduced on the lumenal side of the thylakoid membrane by plastocyanin. In Nymphaea alba (White water-lily), this protein is Photosystem I P700 chlorophyll a apoprotein A2.